The chain runs to 128 residues: Nanos homolog 1 (128 aa).

Positions 7 to 23 are essential for its translational repressor activity; that stretch reads FDSWSDYLGLSSLISRG. A disordered region spans residues 23 to 56; the sequence is GLQPRGEGENPSPRWNVSCPAPAEPLPSKEPEGR. A Nanos-type zinc finger spans residues 60-114; sequence GCGFCRSNKEAMSLYSSHRLRSLDGRVLCPVLRGYTCPLCGANGDWAHTMRYCPL. Zn(2+) contacts are provided by C61, C64, H77, C88, C96, C99, H107, and C112. 2 short sequence motifs (C2HC) span residues 61 to 88 and 96 to 112; these read CGFC…RVLC and CPLC…MRYC.

The protein belongs to the nanos family. Interacts with ccnb1.

The protein resides in the cytoplasm. It is found in the perinuclear region. Acts as a translational repressor. Can mediate repression affecting different steps in the translation process: cap-driven, IRES-driven, polyadenylated RNAs or nonpolyadenylated RNAs. Essential for the development of primordial germ cells (PGCs) by ensuring their proper migration and survival. In Xenopus borealis (Kenyan clawed frog), this protein is Nanos homolog 1 (nanos1).